Consider the following 4684-residue polypeptide: Plectin (4684 aa).

The globular 1 stretch occupies residues 1–1470 (MVAGMLMPRD…SELTTLTSQY (1470 aa)). Phosphoserine occurs at positions 20 and 21. Position 26 is a phosphotyrosine (Val26). Gly42 is subject to Phosphoserine. Thr113 carries the phosphothreonine modification. Phosphoserine is present on residues Ser125 and Ser149. The disordered stretch occupies residues 144–179 (ELEEVSPETPVVPATTQRTLARPGPEPAPATDERDR). Residues 175–400 (DERDRVQKKT…YVSSLYDAMP (226 aa)) are actin-binding. 2 consecutive Calponin-homology (CH) domains span residues 179-282 (RVQK…LHFQ) and 295-400 (MTAK…DAMP). Residues 645-710 (LQSVQRRPEL…SIEEFRAKIE (66 aa)) form a Spectrin 1 repeat. Residue Ser720 is modified to Phosphoserine. Spectrin repeat units follow at residues 740 to 824 (KLLN…REDH) and 837 to 930 (LQTQ…AVVQ). An SH3 domain is found at 941–998 (RGRLPLLAVCDYKQVEVTVHKGDECQLVGPAQPSHWKVLSSSGSEAAVPSVCFLVPPP). Residues 964–4574 (ECQLVGPAQP…VGAYSKYLTC (3611 aa)) are required for interaction with intermediate filament proteins. Ser1047 is modified (phosphoserine). The Spectrin 4 repeat unit spans residues 1315 to 1415 (RERVAQLLER…QRFAKQYINA (101 aa)). Ser1435 is modified (phosphoserine). A coiled-coil region spans residues 1469–2756 (QYIKFISETL…AHSEEVTASQ (1288 aa)). Residues 1471 to 2755 (IKFISETLRR…LAHSEEVTAS (1285 aa)) are central fibrous rod domain. The interval 1618–1650 (RAEEAEAQKRQAQEEAERLRRQVQDESQRKRQA) is disordered. Ser1721 carries the post-translational modification Phosphoserine. Lys1725 carries the post-translational modification N6-acetyllysine. At Ser1732 the chain carries Phosphoserine. 3 disordered regions span residues 1794–1836 (LAQA…KQRQ), 2105–2139 (EAAR…EAAR), and 2217–2307 (RGEA…MEKH). Basic and acidic residues-rich tracts occupy residues 1798-1836 (EAEK…KQRQ), 2105-2128 (EAAR…ERVQ), and 2217-2258 (RGEA…KQSA). A compositionally biased stretch (low complexity) spans 2259-2272 (EEQAQARAQAQAAA). Positions 2273-2288 (EKLRKEAEQEAARRAQ) are enriched in basic and acidic residues. Residue Ser2631 is modified to Phosphoserine. Lys2636 carries the N6-acetyllysine modification. 2 disordered regions span residues 2668–2707 (REEQ…RRKQ) and 2763–2784 (LPNG…HSFD). Residues 2679-2707 (EQERQRLVASMEEARRRQHEAEEGVRRKQ) are compositionally biased toward basic and acidic residues. Residues 2756-4684 (QVAATKTLPN…SLGGPESAVA (1929 aa)) form a globular 2 region. A phosphoserine mark is found at Ser2782 and Ser2802. 5 Plectin repeats span residues 2826 to 2863 (RHYL…PGTA), 2864 to 2901 (LILL…PELH), 2902 to 2939 (HKLL…REHG), 2940 to 2977 (IRLL…EEMN), and 2981 to 3015 (ADPS…PETG). Residue Thr2886 is modified to Phosphothreonine. Phosphotyrosine is present on Tyr3033. Ser3036 is subject to Phosphoserine. Residues Lys3053 and Lys3091 each carry the N6-acetyllysine modification. 6 Plectin repeats span residues 3116–3153 (SLVP…VDTV), 3154–3191 (RRAL…SDMA), 3192–3229 (VALL…PEFH), 3230–3267 (EKLL…REQG), 3268–3305 (LRLL…EETS), and 3306–3343 (RALS…QLTG). A disordered region spans residues 3310 to 3331 (APRADAKAYSDPSTGEPATYGE). At Tyr3362 the chain carries Phosphotyrosine. At Lys3420 the chain carries N6-acetyllysine. Plectin repeat units follow at residues 3485 to 3522 (RTLL…ATTA), 3523 to 3560 (ALLL…PELH), 3561 to 3598 (EQLL…RQHG), 3599 to 3636 (IRLL…EEMN), and 3640 to 3674 (ADPS…PETG). Ser3580 is modified (phosphoserine). Phosphothreonine is present on Thr3785. 5 Plectin repeats span residues 3820–3857 (WCYL…AEVA), 3858–3895 (RLLL…PELH), 3896–3933 (DRLL…TEEA), 3934–3971 (LRLL…KDTH), and 3975–4008 (SEPS…DGTG). A required for interaction with type2 keratins, DES and VIM region spans residues 3956-4293 (PLEVAYQRGY…ETGKEMSVYE (338 aa)). The residue at position 4030 (Thr4030) is a Phosphothreonine. Phosphoserine is present on Ser4054. 7 Plectin repeats span residues 4063-4100 (QKFL…PGTA), 4101-4138 (FELL…PEFK), 4139-4176 (DKLL…KDHG), 4177-4214 (IRLL…EEMN), 4218-4252 (TDPS…PQTG), 4265-4305 (RKTS…HQTY), and 4319-4356 (TISS…RSAL). The interval 4250–4300 (QTGLCLLPLKEKKRERKTSSKSSVRKRRVVIVDPETGKEMSVYEAYRKGLI) is binding to intermediate filaments. Phosphoserine is present on residues Ser4382, Ser4384, Ser4385, Ser4386, Ser4389, Ser4390, Ser4391, and Ser4392. Tyr4393 is modified (phosphotyrosine). Phosphoserine occurs at positions 4396, 4400, and 4406. Plectin repeat units follow at residues 4408-4445 (SDPT…NITG), 4446-4483 (QRLL…KIMV), 4484-4521 (DRIN…YEAG), 4522-4559 (QRFL…ARTA), and 4560-4597 (QKLR…EGTG). Thr4411 is subject to Phosphothreonine. A required for efficient interaction with KRT5 and KRT14 heterodimers region spans residues 4505-4574 (MSAAQALKKG…VGAYSKYLTC (70 aa)). Thr4539 carries the phosphothreonine; by CDK1 modification. Phosphoserine is present on residues Ser4607 and Ser4613. Residues 4611 to 4678 (YYSPYSVSGS…ASGSSASLGG (68 aa)) show a composition bias toward low complexity. The interval 4611-4684 (YYSPYSVSGS…SLGGPESAVA (74 aa)) is disordered. Tyr4615 is modified (phosphotyrosine). Phosphoserine is present on residues Ser4616, Ser4618, and Ser4622. Position 4623 is a phosphothreonine (Thr4623). The 4 X 4 AA tandem repeats of G-S-R-X stretch occupies residues 4625-4640 (GSRTGSRTGSRAGSRR). A Phosphoserine modification is found at Ser4626. Arg4627 and Arg4640 each carry omega-N-methylarginine. Phosphoserine occurs at positions 4642, 4672, and 4675.

Belongs to the plakin or cytolinker family. Homodimer or homotetramer. Interacts (via actin-binding domain) with SYNE3. Interacts (via calponin-homology (CH) 1 domain) with VIM (via rod region). Interacts (via N-terminus) with DST isoform 2 (via N-terminus). Interacts with FER. Interacts with TOR1A. Interacts with ANK3. Identified in complexes that contain VIM, EZR, AHNAK, BFSP1, BFSP2, ANK2, PLEC, PRX and spectrin. Interacts with COL17A1. As to quaternary structure, interacts with KRT14, heterodimers consisting of KRT8 and KRT18, heterodimers consisting of KRT5 and KRT14, heterodimers consisting of KRT14 and KRT15, and heterodimers consisting of KRT1 and KRT10. Interacts with DES and VIM. Phosphorylated by CDK1; regulates dissociation from intermediate filaments during mitosis. Widely expressed with highest levels in muscle, heart, placenta and spinal cord.

Its subcellular location is the cytoplasm. It is found in the cytoskeleton. The protein resides in the cell junction. The protein localises to the hemidesmosome. It localises to the cell projection. Its subcellular location is the podosome. Interlinks intermediate filaments with microtubules and microfilaments and anchors intermediate filaments to desmosomes or hemidesmosomes. Could also bind muscle proteins such as actin to membrane complexes in muscle. May be involved not only in the filaments network, but also in the regulation of their dynamics. Structural component of muscle. Isoform 9 plays a major role in the maintenance of myofiber integrity. This chain is Plectin (PLEC), found in Homo sapiens (Human).